The chain runs to 65 residues: Large ribosomal subunit protein bL35 (65 aa).

The segment at 1–22 is disordered; that stretch reads MPKIKTVRGAAKRFKKTGSGGF. Basic residues predominate over residues 10 to 22; the sequence is AAKRFKKTGSGGF.

This sequence belongs to the bacterial ribosomal protein bL35 family.

This Serratia proteamaculans (strain 568) protein is Large ribosomal subunit protein bL35.